We begin with the raw amino-acid sequence, 460 residues long: Bifunctional protein GlmU (460 aa).

Residues Met1–Arg229 are pyrophosphorylase. Residues Leu8–Gly11, Lys22, Gln72, and Gly77–Thr78 each bind UDP-N-acetyl-alpha-D-glucosamine. Asp102 contacts Mg(2+). UDP-N-acetyl-alpha-D-glucosamine-binding residues include Gly139, Glu154, Asn169, and Asn227. Asn227 is a binding site for Mg(2+). The interval Val230 to Asn250 is linker. The interval Gly251–Lys460 is N-acetyltransferase. The UDP-N-acetyl-alpha-D-glucosamine site is built by Arg332 and Lys350. The active-site Proton acceptor is His362. Tyr365 and Asn376 together coordinate UDP-N-acetyl-alpha-D-glucosamine. Residues Ala379, Asn385 to Tyr386, Ser404, Ala422, and Arg439 each bind acetyl-CoA.

This sequence in the N-terminal section; belongs to the N-acetylglucosamine-1-phosphate uridyltransferase family. In the C-terminal section; belongs to the transferase hexapeptide repeat family. In terms of assembly, homotrimer. The cofactor is Mg(2+).

The protein resides in the cytoplasm. The catalysed reaction is alpha-D-glucosamine 1-phosphate + acetyl-CoA = N-acetyl-alpha-D-glucosamine 1-phosphate + CoA + H(+). The enzyme catalyses N-acetyl-alpha-D-glucosamine 1-phosphate + UTP + H(+) = UDP-N-acetyl-alpha-D-glucosamine + diphosphate. The protein operates within nucleotide-sugar biosynthesis; UDP-N-acetyl-alpha-D-glucosamine biosynthesis; N-acetyl-alpha-D-glucosamine 1-phosphate from alpha-D-glucosamine 6-phosphate (route II): step 2/2. It functions in the pathway nucleotide-sugar biosynthesis; UDP-N-acetyl-alpha-D-glucosamine biosynthesis; UDP-N-acetyl-alpha-D-glucosamine from N-acetyl-alpha-D-glucosamine 1-phosphate: step 1/1. Its pathway is bacterial outer membrane biogenesis; LPS lipid A biosynthesis. Its function is as follows. Catalyzes the last two sequential reactions in the de novo biosynthetic pathway for UDP-N-acetylglucosamine (UDP-GlcNAc). The C-terminal domain catalyzes the transfer of acetyl group from acetyl coenzyme A to glucosamine-1-phosphate (GlcN-1-P) to produce N-acetylglucosamine-1-phosphate (GlcNAc-1-P), which is converted into UDP-GlcNAc by the transfer of uridine 5-monophosphate (from uridine 5-triphosphate), a reaction catalyzed by the N-terminal domain. The chain is Bifunctional protein GlmU from Streptococcus pyogenes serotype M5 (strain Manfredo).